Reading from the N-terminus, the 100-residue chain is Large ribosomal subunit protein uL23 (100 aa).

The protein belongs to the universal ribosomal protein uL23 family. Part of the 50S ribosomal subunit. Contacts protein L29, and trigger factor when it is bound to the ribosome.

Its function is as follows. One of the early assembly proteins it binds 23S rRNA. One of the proteins that surrounds the polypeptide exit tunnel on the outside of the ribosome. Forms the main docking site for trigger factor binding to the ribosome. This is Large ribosomal subunit protein uL23 from Mycobacterium sp. (strain JLS).